Here is a 297-residue protein sequence, read N- to C-terminus: MIPLSVRVPASTANVGPGFDSVGIALSLYLDVVVKEKADKWQVIHSFEESIPTDDKNLIVSTACKVCPSISPHIIEVTSNIPLTRGLGSSASAIVAGIEVANQLGDLNLTADQKVQIATNFEGHPDNVAASILGGTVIGALDGKDISVVRIESKELGVISLIPNEELNTDESRSVLPKMFPFHEAVKASAISNVLVAALCQKRWEVVGEMMERDHFHEPYRLELVPLLPSIRKCAKEFGAYGTALSGAGPSIFILTPYEKRQEIAEQLARVFTDMKVCELEIDHKGIIVNKEEHIGL.

An ATP-binding site is contributed by 82–92 (PLTRGLGSSAS).

This sequence belongs to the GHMP kinase family. Homoserine kinase subfamily.

It is found in the cytoplasm. It catalyses the reaction L-homoserine + ATP = O-phospho-L-homoserine + ADP + H(+). Its pathway is amino-acid biosynthesis; L-threonine biosynthesis; L-threonine from L-aspartate: step 4/5. Catalyzes the ATP-dependent phosphorylation of L-homoserine to L-homoserine phosphate. The chain is Homoserine kinase from Bacillus cereus (strain G9842).